Here is a 544-residue protein sequence, read N- to C-terminus: CTP synthase (544 aa).

The amidoligase domain stretch occupies residues 1-265; that stretch reads MARFIFITGG…DEAVLSAFGI (265 aa). Position 13 (serine 13) interacts with CTP. A UTP-binding site is contributed by serine 13. Residue 14–19 coordinates ATP; sequence SLGKGL. Tyrosine 54 lines the L-glutamine pocket. An ATP-binding site is contributed by aspartate 71. Residues aspartate 71 and glutamate 139 each coordinate Mg(2+). CTP is bound by residues 146–148, 186–191, and lysine 222; these read DIE and KTKPTQ. Residues 186–191 and lysine 222 each bind UTP; that span reads KTKPTQ. The Glutamine amidotransferase type-1 domain maps to 291–543; sequence TIGVVGKYVG…IAAALQQSRL (253 aa). Glycine 355 is a binding site for L-glutamine. Cysteine 382 (nucleophile; for glutamine hydrolysis) is an active-site residue. L-glutamine is bound by residues 383-386, glutamate 406, and arginine 471; that span reads LGMQ. Residues histidine 516 and glutamate 518 contribute to the active site.

Belongs to the CTP synthase family. Homotetramer.

It carries out the reaction UTP + L-glutamine + ATP + H2O = CTP + L-glutamate + ADP + phosphate + 2 H(+). The enzyme catalyses L-glutamine + H2O = L-glutamate + NH4(+). It catalyses the reaction UTP + NH4(+) + ATP = CTP + ADP + phosphate + 2 H(+). The protein operates within pyrimidine metabolism; CTP biosynthesis via de novo pathway; CTP from UDP: step 2/2. Allosterically activated by GTP, when glutamine is the substrate; GTP has no effect on the reaction when ammonia is the substrate. The allosteric effector GTP functions by stabilizing the protein conformation that binds the tetrahedral intermediate(s) formed during glutamine hydrolysis. Inhibited by the product CTP, via allosteric rather than competitive inhibition. Functionally, catalyzes the ATP-dependent amination of UTP to CTP with either L-glutamine or ammonia as the source of nitrogen. Regulates intracellular CTP levels through interactions with the four ribonucleotide triphosphates. The chain is CTP synthase from Rhizorhabdus wittichii (strain DSM 6014 / CCUG 31198 / JCM 15750 / NBRC 105917 / EY 4224 / RW1) (Sphingomonas wittichii).